The following is a 1129-amino-acid chain: ATP-dependent DNA helicase mph1 (1129 aa).

Disordered regions lie at residues 1 to 101 (MTGS…FEDA), 124 to 222 (TQLT…QNEG), and 236 to 306 (DAFD…TQHK). Basic and acidic residues predominate over residues 45-63 (DGTASDVRRRPSENRESQR). Composition is skewed to polar residues over residues 203-222 (NTKA…QNEG) and 242-285 (ISLS…QTDQ). The segment covering 297-306 (QKDEPPTQHK) has biased composition (basic and acidic residues). The Helicase ATP-binding domain occupies 331-499 (IAQKGLFHNL…AVIDGLDIAR (169 aa)). Residue 344-351 (LPTGLGKT) coordinates ATP. The DEAH box signature appears at 447–450 (DEAH). Residues 674 to 843 (VLNHFMDAGE…GSRFTFHDDI (170 aa)) enclose the Helicase C-terminal domain. 3 disordered regions span residues 863–930 (IPDE…VEIP), 1018–1060 (RQGD…STED), and 1072–1129 (SVVK…DSDD). Basic residues-rich tracts occupy residues 877 to 889 (RRGR…PKKF) and 1028 to 1044 (SPRH…KPRY). A compositionally biased stretch (polar residues) spans 1077 to 1086 (QKQQPFYSSQ).

Belongs to the DEAD box helicase family. DEAH subfamily. FANCM sub-subfamily. In terms of assembly, interacts with the MHF histone-fold complex to form the FANCM-MHF complex.

It localises to the nucleus. It catalyses the reaction ATP + H2O = ADP + phosphate + H(+). Its function is as follows. ATP-dependent DNA helicase involved in DNA damage repair by homologous recombination and in genome maintenance. Capable of unwinding D-loops. Plays a role in limiting crossover recombinants during mitotic DNA double-strand break (DSB) repair. Component of a FANCM-MHF complex which promotes gene conversion at blocked replication forks, probably by reversal of the stalled fork. In Aspergillus oryzae (strain ATCC 42149 / RIB 40) (Yellow koji mold), this protein is ATP-dependent DNA helicase mph1.